The sequence spans 762 residues: N,N-dimethylformamidase beta subunit (762 aa).

Heterotetramer of two DmfA1 (alpha) and two DmfA2 (beta) subunits.

It catalyses the reaction N,N-dimethylformamide + H2O = dimethylamine + formate. In terms of biological role, hydrolyzes N,N-dimethylformamide, and to a lesser extent N,N-dimethylacetamide and N,N-diethylacetamide. Has no activity against the substituted amides N-methylformamide, N-ethylformamide, N-ethylformamide and N-methylacetamide or the unsubstituted amides formamide, nicotinamide, acetoamide, benzamide, acetamide and acrylamide. This chain is N,N-dimethylformamidase beta subunit, found in Paracoccus aminophilus.